Consider the following 226-residue polypeptide: MATTNNKNLTITEKVYVRVRLANEADISHIYKLFYQIHEYHNYTHLYKATESSLCDLLFKANPNPLFYGPSVLLLEVSPTPFENTKKDEKFKPVLKTFDLRATVEDKEAEEFKSKSCGDEKEDVFIAGYAFFYANYSCFYDKAGIYFESLYFRESYRKLGMGSLLFGTVASIAANNGFASVEGIVAVWNKKSYDFYVNMGVEIFDEFRYGKLVGDALQKYADKEKA.

An important in binding site and for catalytic activity region spans residues 29 to 45 (HIYKLFYQIHEYHNYTH). An N-acetyltransferase domain is found at 72–222 (VLLLEVSPTP…VGDALQKYAD (151 aa)).

This sequence belongs to the acetyltransferase family. In terms of assembly, homodimer.

The protein resides in the cytoplasm. The catalysed reaction is tyramine + (E)-feruloyl-CoA = N-[(E)-feruloyl]tyramine + CoA + H(+). Inhibited by (2-hydroxyphenyl)amino sulfinyl acetic acid 1,1-dimethylethyl ester, by DEPC and by N-ethylmaleimide. Functionally, synthesizes amides which are involved in stress response in the cell wall. Catalyzes the synthesis of hydroxycinnamic acid amides from hydroxycinnamoyl-CoA thioesters and various hydroxyphenylethylamines such as 4-coumaroyl-CoA and sinapoyl-CoA. The chain is Tyramine N-feruloyltransferase 4/11 (THT4) from Nicotiana tabacum (Common tobacco).